A 128-amino-acid polypeptide reads, in one-letter code: Large ribosomal subunit protein bL12 (128 aa).

Belongs to the bacterial ribosomal protein bL12 family. As to quaternary structure, homodimer. Part of the ribosomal stalk of the 50S ribosomal subunit. Forms a multimeric L10(L12)X complex, where L10 forms an elongated spine to which 2 to 4 L12 dimers bind in a sequential fashion. Binds GTP-bound translation factors.

In terms of biological role, forms part of the ribosomal stalk which helps the ribosome interact with GTP-bound translation factors. Is thus essential for accurate translation. This Phenylobacterium zucineum (strain HLK1) protein is Large ribosomal subunit protein bL12.